The sequence spans 928 residues: Chitin synthase 2 (928 aa).

Disordered stretches follow at residues 1–45 (MAYN…EAYA) and 110–179 (AYYT…SPAP). The segment covering 17–28 (PSAQPQYDSRSP) has biased composition (polar residues). Over residues 130–140 (PSHDEPYRPDT) the composition is skewed to basic and acidic residues. Transmembrane regions (helical) follow at residues 472-492 (SAFG…YVAL), 570-589 (WLNG…YQLW), 613-633 (LFAW…TASL), 644-664 (TVLG…CFIL), 678-698 (MMMV…SIFL), 723-743 (FFGL…ASFL), 753-773 (CFLQ…IYAF), 854-874 (VTAW…IAGF), and 893-913 (VILW…CWFL).

The protein belongs to the chitin synthase family. Class I subfamily.

It is found in the cell membrane. The enzyme catalyses [(1-&gt;4)-N-acetyl-beta-D-glucosaminyl](n) + UDP-N-acetyl-alpha-D-glucosamine = [(1-&gt;4)-N-acetyl-beta-D-glucosaminyl](n+1) + UDP + H(+). Functionally, polymerizes chitin, a structural polymer of the cell wall and septum, by transferring the sugar moiety of UDP-GlcNAc to the non-reducing end of the growing chitin polymer. CHS2 plays a synergistic role to CHS1 in normal yeast cell reproductive growth, even if this role is less predominant than for CHS1. With CHS3, plays an important role in virulence. This Exophiala dermatitidis (Black yeast-like fungus) protein is Chitin synthase 2.